We begin with the raw amino-acid sequence, 231 residues long: 2,3-bisphosphoglycerate-dependent phosphoglycerate mutase (231 aa).

Residues Arg10–Asn17, Thr23–Gly24, Arg62, Glu89–Tyr92, Lys100, Arg116–Arg117, and Gly185–Asn186 each bind substrate. Catalysis depends on His11, which acts as the Tele-phosphohistidine intermediate. The active-site Proton donor/acceptor is Glu89.

The protein belongs to the phosphoglycerate mutase family. BPG-dependent PGAM subfamily. As to quaternary structure, homodimer.

It carries out the reaction (2R)-2-phosphoglycerate = (2R)-3-phosphoglycerate. It functions in the pathway carbohydrate degradation; glycolysis; pyruvate from D-glyceraldehyde 3-phosphate: step 3/5. Functionally, catalyzes the interconversion of 2-phosphoglycerate and 3-phosphoglycerate. This chain is 2,3-bisphosphoglycerate-dependent phosphoglycerate mutase, found in Buchnera aphidicola subsp. Acyrthosiphon pisum (strain 5A).